The following is a 534-amino-acid chain: MATGLQVPLPQLATGLLLLLSVQPWAESGKVLVVPTDGSHWLSMREALRDLHARGHQVVVLTLEVNMYIKEENFFTLTTYAISWTQDEFDRLLLGHTQSFFETEHLLMKFSRRMAIMNNMSLIIHRSCVELLHNEALIRHLHATSFDVVLTDPFHLCAAVLAKYLSIPAVFFLRNIPCDLDFKGTQCPNPSSYIPRLLTTNSDHMTFLQRVKNMLYPLALSYLCHAVSAPYASLASELFQREVSVVDLVSHASVWLFRGDFVMDYPRPIMPNMVFIGGINCANGKPLSQEFEAYINASGEHGIVVFSLGSMVSEIPEKKAMAIADALGKIPQTVLWRYTGTRPSNLANNTILVKWLPQNDLLGHPMTRAFITHAGSHGVYESICNGVPMVMMPLFGDQMDNAKRMETKGAGVTLNVLEMTSEDLENALKAVINDKSYKENIMRLSSLHKDRPVEPLDLAVFWVEFVMRHKGAPHLRPAAHDLTWYQYHSLDVIGFLLAVVLTVAFITFKCCAYGYRKCLGKKGRVKKAHKSKTH.

The N-terminal stretch at 1–28 is a signal peptide; that stretch reads MATGLQVPLPQLATGLLLLLSVQPWAES. N-linked (GlcNAc...) asparagine glycans are attached at residues N119, N296, and N348. Residues 492-508 traverse the membrane as a helical segment; the sequence is VIGFLLAVVLTVAFITF.

This sequence belongs to the UDP-glycosyltransferase family. Homodimer. Homooligomer. Interacts with UGT1A1, UGT1A3, UGT1A4, UGT1A6, UGT1A7, UGT1A8, UGT1A9 and UGT1A10 to form heterodimers. Isoform 1 interacts with isoform 2/i2 suggesting that oligomerization is involved in negative regulation of transferase activity by isoform 2. Isoform 1 also interacts with respective i2 isoforms of UGT1A1, UGT1A3, UGT1A4, UGT1A6, UGT1A7, UGT1A8, UGT1A9 and UGT1A10. As to expression, isoform 1 and isoform 2 are expressed in colon and small intestine. Neither isoform is expressed in liver, kidney or esophagus.

It is found in the endoplasmic reticulum membrane. It catalyses the reaction glucuronate acceptor + UDP-alpha-D-glucuronate = acceptor beta-D-glucuronoside + UDP + H(+). It carries out the reaction zolasartan + UDP-alpha-D-glucuronate = zolarsartan-1-N-beta-D-glucuronide + UDP. Functionally, UDP-glucuronosyltransferase (UGT) that catalyzes phase II biotransformation reactions in which lipophilic substrates are conjugated with glucuronic acid to increase the metabolite's water solubility, thereby facilitating excretion into either the urine or bile. Essential for the elimination and detoxification of drugs, xenobiotics and endogenous compounds. Involved in the glucuronidation of the AGTR1 angiotensin receptor antagonist zolarsatan, a drug which can inhibit the effect of angiotensin II. Lacks UGT glucuronidation activity but acts as a negative regulator of isoform 1. This Homo sapiens (Human) protein is UDP-glucuronosyltransferase 1A5.